We begin with the raw amino-acid sequence, 164 residues long: Cytochrome c oxidase subunit 4, mitochondrial (164 aa).

The transit peptide at 1–33 directs the protein to the mitochondrion; sequence MFMNSMLRVSRQRAAVRSTVSLYRGFVSASIRR. Zn(2+)-binding residues include cysteine 120, histidine 128, cysteine 143, and cysteine 146.

This sequence belongs to the cytochrome c oxidase subunit 5B family. Component of the cytochrome c oxidase (complex IV, CIV), a multisubunit enzyme composed of a catalytic core of 3 subunits and several supernumerary subunits. The complex exists as a monomer or a dimer and forms supercomplexes (SCs) in the inner mitochondrial membrane with ubiquinol-cytochrome c oxidoreductase (cytochrome b-c1 complex, complex III, CIII).

The protein localises to the mitochondrion inner membrane. The protein operates within energy metabolism; oxidative phosphorylation. Component of the cytochrome c oxidase, the last enzyme in the mitochondrial electron transport chain which drives oxidative phosphorylation. The respiratory chain contains 3 multisubunit complexes succinate dehydrogenase (complex II, CII), ubiquinol-cytochrome c oxidoreductase (cytochrome b-c1 complex, complex III, CIII) and cytochrome c oxidase (complex IV, CIV), that cooperate to transfer electrons derived from NADH and succinate to molecular oxygen, creating an electrochemical gradient over the inner membrane that drives transmembrane transport and the ATP synthase. Cytochrome c oxidase is the component of the respiratory chain that catalyzes the reduction of oxygen to water. Electrons originating from reduced cytochrome c in the intermembrane space (IMS) are transferred via the dinuclear copper A center (CU(A)) of subunit 2 and heme A of subunit 1 to the active site in subunit 1, a binuclear center (BNC) formed by heme A3 and copper B (CU(B)). The BNC reduces molecular oxygen to 2 water molecules using 4 electrons from cytochrome c in the IMS and 4 protons from the mitochondrial matrix. The sequence is that of Cytochrome c oxidase subunit 4, mitochondrial (cox4) from Schizosaccharomyces pombe (strain 972 / ATCC 24843) (Fission yeast).